A 500-amino-acid polypeptide reads, in one-letter code: ATP synthase subunit beta (500 aa).

155–162 (GGAGVGKT) is an ATP binding site.

It belongs to the ATPase alpha/beta chains family. As to quaternary structure, F-type ATPases have 2 components, CF(1) - the catalytic core - and CF(0) - the membrane proton channel. CF(1) has five subunits: alpha(3), beta(3), gamma(1), delta(1), epsilon(1). CF(0) has three main subunits: a(1), b(2) and c(9-12). The alpha and beta chains form an alternating ring which encloses part of the gamma chain. CF(1) is attached to CF(0) by a central stalk formed by the gamma and epsilon chains, while a peripheral stalk is formed by the delta and b chains.

The protein resides in the cell inner membrane. The enzyme catalyses ATP + H2O + 4 H(+)(in) = ADP + phosphate + 5 H(+)(out). Produces ATP from ADP in the presence of a proton gradient across the membrane. The catalytic sites are hosted primarily by the beta subunits. The polypeptide is ATP synthase subunit beta (Azobacteroides pseudotrichonymphae genomovar. CFP2).